Here is a 244-residue protein sequence, read N- to C-terminus: Octanoyltransferase (244 aa).

The BPL/LPL catalytic domain occupies 49–237 (VAPGNFLIFC…HLTALFELHI (189 aa)). Substrate-binding positions include 94-101 (RGGDITYH), 167-169 (AMG), and 180-182 (GFA). Cysteine 198 functions as the Acyl-thioester intermediate in the catalytic mechanism.

It belongs to the LipB family.

It localises to the cytoplasm. It carries out the reaction octanoyl-[ACP] + L-lysyl-[protein] = N(6)-octanoyl-L-lysyl-[protein] + holo-[ACP] + H(+). It functions in the pathway protein modification; protein lipoylation via endogenous pathway; protein N(6)-(lipoyl)lysine from octanoyl-[acyl-carrier-protein]: step 1/2. Its function is as follows. Catalyzes the transfer of endogenously produced octanoic acid from octanoyl-acyl-carrier-protein onto the lipoyl domains of lipoate-dependent enzymes. Lipoyl-ACP can also act as a substrate although octanoyl-ACP is likely to be the physiological substrate. This chain is Octanoyltransferase, found in Cytophaga hutchinsonii (strain ATCC 33406 / DSM 1761 / CIP 103989 / NBRC 15051 / NCIMB 9469 / D465).